Here is a 132-residue protein sequence, read N- to C-terminus: Major pollen allergen Art v 1 (132 aa).

The signal sequence occupies residues M1–A24. Positions K28–C77 are defensin-like domain. 4 cysteine pairs are disulfide-bonded: C30/C77, C41/C61, C46/C71, and C50/C73. Epitope recognized by IgE antibodies of mugwort pollen-sensitized patients regions lie at residues R64–S70 and K79–A87. A disordered region spans residues P81 to H132. Residues G83–A114 are compositionally biased toward pro residues. Residues D115–G124 are compositionally biased toward low complexity.

The protein in the N-terminal section; belongs to the DEFL family. In terms of processing, the mature protein extracted from the plant exhibits an average rate of 76% of hydroxyprolines. O-glycosylated. O-linkage of 3 galactoses plus 9-16 or 21-23 arabinose residues attached on one or two hydroxyprolines.

Its subcellular location is the secreted. This chain is Major pollen allergen Art v 1, found in Artemisia vulgaris (Mugwort).